Reading from the N-terminus, the 143-residue chain is HTH-type transcriptional regulator BudR (143 aa).

Residues 1–58 (MELRYLRYFVAVARERHFTRAAKALGISQPPLSQQIKRLEEEVGTPLFRRLTRGVELT) form the HTH lysR-type domain. The H-T-H motif DNA-binding region spans 18–37 (FTRAAKALGISQPPLSQQIK).

This sequence belongs to the LysR transcriptional regulatory family.

In terms of biological role, regulator of the budABC operon for 2,3-butanediol synthesis. The sequence is that of HTH-type transcriptional regulator BudR (budR) from Klebsiella aerogenes (Enterobacter aerogenes).